A 276-amino-acid chain; its full sequence is Probable endonuclease 4 (276 aa).

Residues His70, His108, Glu144, Asp177, His180, His211, Asp224, His226, and Glu256 each coordinate Zn(2+).

Belongs to the AP endonuclease 2 family. The cofactor is Zn(2+).

It carries out the reaction Endonucleolytic cleavage to 5'-phosphooligonucleotide end-products.. Endonuclease IV plays a role in DNA repair. It cleaves phosphodiester bonds at apurinic or apyrimidinic (AP) sites, generating a 3'-hydroxyl group and a 5'-terminal sugar phosphate. This chain is Probable endonuclease 4, found in Metamycoplasma arthritidis (strain 158L3-1) (Mycoplasma arthritidis).